The sequence spans 430 residues: Histidine--tRNA ligase (430 aa).

The protein belongs to the class-II aminoacyl-tRNA synthetase family. Homodimer.

Its subcellular location is the cytoplasm. The catalysed reaction is tRNA(His) + L-histidine + ATP = L-histidyl-tRNA(His) + AMP + diphosphate + H(+). This Anaplasma marginale (strain Florida) protein is Histidine--tRNA ligase.